The sequence spans 201 residues: Large ribosomal subunit protein bL25 (201 aa).

Positions 179 to 201 (VSITAPRVEAEKTEEEEPESTEE) are disordered. Residues 190 to 201 (KTEEEEPESTEE) are compositionally biased toward acidic residues.

It belongs to the bacterial ribosomal protein bL25 family. CTC subfamily. Part of the 50S ribosomal subunit; part of the 5S rRNA/L5/L18/L25 subcomplex. Contacts the 5S rRNA. Binds to the 5S rRNA independently of L5 and L18.

In terms of biological role, this is one of the proteins that binds to the 5S RNA in the ribosome where it forms part of the central protuberance. This is Large ribosomal subunit protein bL25 from Prosthecochloris aestuarii (strain DSM 271 / SK 413).